A 428-amino-acid chain; its full sequence is S-adenosylmethionine synthase (428 aa).

Position 14 (His-14) interacts with ATP. Position 16 (Asp-16) interacts with Mg(2+). Glu-42 provides a ligand contact to K(+). Glu-55 and Gln-98 together coordinate L-methionine. The interval 98–108 (QSGDINRGVER) is flexible loop. Residues 165–167 (DAK), 251–252 (KF), Asp-260, 266–267 (RK), Ala-283, and Lys-287 each bind ATP. Asp-260 provides a ligand contact to L-methionine. Lys-291 is a binding site for L-methionine.

This sequence belongs to the AdoMet synthase family. In terms of assembly, homotetramer; dimer of dimers. Mg(2+) is required as a cofactor. The cofactor is K(+).

The protein localises to the cytoplasm. It carries out the reaction L-methionine + ATP + H2O = S-adenosyl-L-methionine + phosphate + diphosphate. It functions in the pathway amino-acid biosynthesis; S-adenosyl-L-methionine biosynthesis; S-adenosyl-L-methionine from L-methionine: step 1/1. Functionally, catalyzes the formation of S-adenosylmethionine (AdoMet) from methionine and ATP. The overall synthetic reaction is composed of two sequential steps, AdoMet formation and the subsequent tripolyphosphate hydrolysis which occurs prior to release of AdoMet from the enzyme. This chain is S-adenosylmethionine synthase, found in Parabacteroides distasonis (strain ATCC 8503 / DSM 20701 / CIP 104284 / JCM 5825 / NCTC 11152).